The following is a 122-amino-acid chain: Small ribosomal subunit protein uS13 (122 aa).

The interval Gln-95–Lys-122 is disordered.

Belongs to the universal ribosomal protein uS13 family. In terms of assembly, part of the 30S ribosomal subunit. Forms a loose heterodimer with protein S19. Forms two bridges to the 50S subunit in the 70S ribosome.

Its function is as follows. Located at the top of the head of the 30S subunit, it contacts several helices of the 16S rRNA. In the 70S ribosome it contacts the 23S rRNA (bridge B1a) and protein L5 of the 50S subunit (bridge B1b), connecting the 2 subunits; these bridges are implicated in subunit movement. Contacts the tRNAs in the A and P-sites. The protein is Small ribosomal subunit protein uS13 of Beijerinckia indica subsp. indica (strain ATCC 9039 / DSM 1715 / NCIMB 8712).